A 624-amino-acid polypeptide reads, in one-letter code: Phosphoenolpyruvate carboxykinase [GTP] (624 aa).

Substrate contacts are provided by residues Arg-88 and 222 to 224 (YGG). Residues Lys-231 and His-250 each contribute to the Mn(2+) site. Ser-272 contacts substrate. 273–278 (MCGKTS) is a binding site for GTP. The active site involves Cys-274. Asp-291 lines the Mn(2+) pocket. 386–388 (NAR) lines the substrate pocket. The GTP site is built by Arg-388 and Arg-420.

This sequence belongs to the phosphoenolpyruvate carboxykinase [GTP] family. Mn(2+) serves as cofactor.

The protein localises to the cytoplasm. It carries out the reaction oxaloacetate + GTP = phosphoenolpyruvate + GDP + CO2. Its pathway is carbohydrate biosynthesis; gluconeogenesis. Its function is as follows. Catalyzes the conversion of oxaloacetate (OAA) to phosphoenolpyruvate (PEP), the rate-limiting step in the metabolic pathway that produces glucose from lactate and other precursors derived from the citric acid cycle. This chain is Phosphoenolpyruvate carboxykinase [GTP], found in Pyrococcus furiosus (strain ATCC 43587 / DSM 3638 / JCM 8422 / Vc1).